Consider the following 213-residue polypeptide: Membrane-spanning 4-domains subfamily A member 3 (213 aa).

Topologically, residues Met1–Gln26 are cytoplasmic. A helical transmembrane segment spans residues Ala27–Val47. Over Cys48 to His58 the chain is Extracellular. A helical membrane pass occupies residues Phe59 to Ser79. Over Gly80–Asn97 the chain is Cytoplasmic. A helical membrane pass occupies residues Ser98–Val118. The Extracellular portion of the chain corresponds to His119–Gly148. The helical transmembrane segment at Leu149–Ala169 threads the bilayer. The Cytoplasmic portion of the chain corresponds to Met170–Glu213. Residues Ser189–Glu213 form a disordered region. Positions Ser201–Glu213 are enriched in polar residues.

The protein belongs to the MS4A family. In terms of assembly, interacts with CDKN3. Interacts with CDKN3-CDK2 complexes through its binding to CDKN3; this interaction facilitates dissociation of cyclin A from CDKN3-CDK2 complexes. As to expression, expressed at low levels only in specific immune tissues, such as, spleen, bone marrow and peripheral blood leukocytes.

The protein resides in the membrane. In terms of biological role, hematopoietic modulator for the G1-S cell cycle transition. Modulates the level of phosphorylation of cyclin-dependent kinase 2 (CDK2) through its direct binding to cyclin-dependent kinase inhibitor 3 (CDKN3/KAP). This chain is Membrane-spanning 4-domains subfamily A member 3 (Ms4a3), found in Mus musculus (Mouse).